The following is a 103-amino-acid chain: Large ribosomal subunit protein bL21 (103 aa).

Belongs to the bacterial ribosomal protein bL21 family. In terms of assembly, part of the 50S ribosomal subunit. Contacts protein L20.

This protein binds to 23S rRNA in the presence of protein L20. This Ruthia magnifica subsp. Calyptogena magnifica protein is Large ribosomal subunit protein bL21.